The primary structure comprises 368 residues: Phosphate acyltransferase (368 aa).

It belongs to the PlsX family. Homodimer. Probably interacts with PlsY.

Its subcellular location is the cytoplasm. The enzyme catalyses a fatty acyl-[ACP] + phosphate = an acyl phosphate + holo-[ACP]. Its pathway is lipid metabolism; phospholipid metabolism. In terms of biological role, catalyzes the reversible formation of acyl-phosphate (acyl-PO(4)) from acyl-[acyl-carrier-protein] (acyl-ACP). This enzyme utilizes acyl-ACP as fatty acyl donor, but not acyl-CoA. The protein is Phosphate acyltransferase of Herpetosiphon aurantiacus (strain ATCC 23779 / DSM 785 / 114-95).